We begin with the raw amino-acid sequence, 577 residues long: Proline--tRNA ligase (577 aa).

This sequence belongs to the class-II aminoacyl-tRNA synthetase family. ProS type 1 subfamily. As to quaternary structure, homodimer.

Its subcellular location is the cytoplasm. It carries out the reaction tRNA(Pro) + L-proline + ATP = L-prolyl-tRNA(Pro) + AMP + diphosphate. Catalyzes the attachment of proline to tRNA(Pro) in a two-step reaction: proline is first activated by ATP to form Pro-AMP and then transferred to the acceptor end of tRNA(Pro). As ProRS can inadvertently accommodate and process non-cognate amino acids such as alanine and cysteine, to avoid such errors it has two additional distinct editing activities against alanine. One activity is designated as 'pretransfer' editing and involves the tRNA(Pro)-independent hydrolysis of activated Ala-AMP. The other activity is designated 'posttransfer' editing and involves deacylation of mischarged Ala-tRNA(Pro). The misacylated Cys-tRNA(Pro) is not edited by ProRS. This is Proline--tRNA ligase from Helicobacter pylori (strain HPAG1).